The chain runs to 538 residues: MTTSLQDGQSAAGRAGAQDSPLAVQVCRVAQGKGDAQDPAQVPGLHALSPASDATRRGAMDRRKAKDLEVQETPSIPNPFPELCCSPLTSVLSAGLFPRSNSRKKQVIKVYSEDETSRALEVPSDVTARDVCQLLILKNHYVDDNSWTLFEHLSHTGVERTVEDHELLTEVLSHWVMEEDNKLYLRKNYAKYEFFKNPMYFFPEHMVSFATEMNGDRSLTQIPQVFLSSNTYPEIHGFLHAKEQGKKSWKKAYFFLRRSGLYFSTKGTSKEPRHLQFFSEFSTSNVYMSLAGKKKHGAPTPYGFCFKPTKAGGPRDLKMLCAEEDQSRMCWVTAIRLLKYGMQLYQNYMHPSQARSACSSQSVSPMRSVSENSLVAMDFSGQKTRVIDNPTEALSVAVEEGLAWRKKGCLRLGNHGSPTAPSQSSAVNMALHRSQPWFHHRISRDEAQQLITRQGPVDGVFLVRDSQSNPRTFVLSMSHGQKIKHFQIIPVEDDGEVFHTLDDGHTKFTDLIQLVEFYQLNKGVLPCKLKHYCARMAV.

The tract at residues 1–73 is disordered; it reads MTTSLQDGQS…KAKDLEVQET (73 aa). At Thr2 the chain carries N-acetylthreonine. The segment covering 54–69 has biased composition (basic and acidic residues); it reads ATRRGAMDRRKAKDLE. The Ras-associating domain maps to 104 to 190; the sequence is KKQVIKVYSE…NKLYLRKNYA (87 aa). A PH domain is found at 232 to 340; it reads YPEIHGFLHA…WVTAIRLLKY (109 aa). 2 positions are modified to phosphoserine: Ser370 and Ser373. The 97-residue stretch at 437–533 folds into the SH2 domain; that stretch reads WFHHRISRDE…VLPCKLKHYC (97 aa).

It belongs to the GRB7/10/14 family. Interacts with the cytoplasmic domain of the autophosphorylated insulin receptor, through the SH2 domain. Interacts with GRB14 (via BPS domain); this interaction protects the tyrosines in the activation loop on INSR from dephosphorylation. Binds to the ankyrin repeat region of TNKS2 via its N-terminus. Interacts with activated NRAS. Interacts (via SH2 domain) with TEK/TIE2 (tyrosine phosphorylated). Phosphorylated on serine residues. Phosphorylated on tyrosine residues by TEK/TIE2.

It is found in the cytoplasm. It localises to the endosome membrane. Functionally, adapter protein which modulates coupling of cell surface receptor kinases with specific signaling pathways. Binds to, and suppresses signals from, the activated insulin receptor (INSR). Potent inhibitor of insulin-stimulated MAPK3 phosphorylation. Plays a critical role regulating PDPK1 membrane translocation in response to insulin stimulation and serves as an adapter protein to recruit PDPK1 to activated insulin receptor, thus promoting PKB/AKT1 phosphorylation and transduction of the insulin signal. The sequence is that of Growth factor receptor-bound protein 14 (Grb14) from Rattus norvegicus (Rat).